Consider the following 432-residue polypeptide: Protein prenyltransferase alpha subunit repeat-containing protein 1-A (432 aa).

PFTA repeat units lie at residues 86–119 (ELID…TLNP), 121–154 (KDLQ…VQEL), 179–212 (EEMH…GNLK), 218–251 (DELS…LSKT), 294–327 (EEMD…HQLL), and 395–432 (SFDS…LQGH).

The protein belongs to the protein prenyltransferase subunit alpha family.

The chain is Protein prenyltransferase alpha subunit repeat-containing protein 1-A (ptar1-a) from Xenopus laevis (African clawed frog).